Reading from the N-terminus, the 883-residue chain is Phosphoenolpyruvate carboxylase (883 aa).

Catalysis depends on residues His-138 and Lys-546.

The protein belongs to the PEPCase type 1 family. It depends on Mg(2+) as a cofactor.

It catalyses the reaction oxaloacetate + phosphate = phosphoenolpyruvate + hydrogencarbonate. Its function is as follows. Forms oxaloacetate, a four-carbon dicarboxylic acid source for the tricarboxylic acid cycle. In Salmonella arizonae (strain ATCC BAA-731 / CDC346-86 / RSK2980), this protein is Phosphoenolpyruvate carboxylase.